Here is a 292-residue protein sequence, read N- to C-terminus: 4-hydroxy-tetrahydrodipicolinate synthase (292 aa).

Thr-45 is a pyruvate binding site. Residue Tyr-133 is the Proton donor/acceptor of the active site. The active-site Schiff-base intermediate with substrate is the Lys-161. Ile-203 is a pyruvate binding site.

This sequence belongs to the DapA family. In terms of assembly, homotetramer; dimer of dimers.

It is found in the cytoplasm. It catalyses the reaction L-aspartate 4-semialdehyde + pyruvate = (2S,4S)-4-hydroxy-2,3,4,5-tetrahydrodipicolinate + H2O + H(+). The protein operates within amino-acid biosynthesis; L-lysine biosynthesis via DAP pathway; (S)-tetrahydrodipicolinate from L-aspartate: step 3/4. Catalyzes the condensation of (S)-aspartate-beta-semialdehyde [(S)-ASA] and pyruvate to 4-hydroxy-tetrahydrodipicolinate (HTPA). The polypeptide is 4-hydroxy-tetrahydrodipicolinate synthase (Vibrio vulnificus (strain YJ016)).